A 413-amino-acid chain; its full sequence is Alpha-ketoglutarate-dependent xanthine dioxygenase xan1 (413 aa).

Low complexity predominate over residues 1-18 (MSATATTTVVEPPTTTLT). The interval 1-24 (MSATATTTVVEPPTTTLTGATEPP) is disordered. 2 residues coordinate Fe cation: His-183 and Asp-185. Thr-228 and Trp-362 together coordinate 2-oxoglutarate. His-377 serves as a coordination point for Fe cation. Arg-389 is a 2-oxoglutarate binding site.

It belongs to the TfdA dioxygenase family. It depends on Fe(2+) as a cofactor.

It is found in the cytoplasm. Its subcellular location is the cytosol. The catalysed reaction is xanthine + 2-oxoglutarate + O2 = urate + succinate + CO2. Its function is as follows. Alpha-ketoglutarate-dependent xanthine dioxygenase is a non-heme mononuclear Fe(2+) enzyme that decarboxylates alpha-ketoglutarate to succinate and CO(2) while hydroxylating xanthine to generate uric acid. Allows xanthine utilization as a nitrogen source. The protein is Alpha-ketoglutarate-dependent xanthine dioxygenase xan1 (xan1) of Schizosaccharomyces pombe (strain 972 / ATCC 24843) (Fission yeast).